The primary structure comprises 295 residues: Nucleotide-binding protein BPUM_3115 (295 aa).

16–23 is a binding site for ATP; it reads GMSGAGKT. 67–70 lines the GTP pocket; sequence DLRG.

It belongs to the RapZ-like family.

Displays ATPase and GTPase activities. In Bacillus pumilus (strain SAFR-032), this protein is Nucleotide-binding protein BPUM_3115.